The sequence spans 357 residues: Dynein axonemal assembly factor 10 (357 aa).

6 WD repeats span residues 63–105 (EKAK…VPVY), 115–154 (NTID…DPVA), 162–205 (ENKR…LRWE), 207–249 (NIKN…PTKG), 257–297 (AHKS…QRSK), and 319–357 (LSTQ…LHKI).

In terms of assembly, component of the PAQosome complex which is responsible for the biogenesis of several protein complexes and which consists of R2TP complex members RUVBL1, RUVBL2, RPAP3 and PIH1D1, URI complex members PFDN2, PFDN6, PDRG1, UXT and URI1 as well as ASDURF, POLR2E and DNAAF10/WDR92. Interacts with PIH1D1; the interaction associates DNAAF10 with the R2TP complex. Interacts with several dynein axonemal assembly factors.

It localises to the dynein axonemal particle. Its function is as follows. Key assembly factor specifically required for the stability of axonemal dynein heavy chains in cytoplasm. In Bos taurus (Bovine), this protein is Dynein axonemal assembly factor 10 (DNAAF10).